Consider the following 779-residue polypeptide: Chloride channel protein CLC-c (779 aa).

The residue at position 27 (Ser-27) is a Phosphoserine. The next 12 membrane-spanning stretches (helical) occupy residues 92–112 (TFLK…VGFL), 142–162 (FAFA…CAFI), 190–210 (STLF…FVVG), 215–235 (MVHT…KKYR), 257–277 (GAAA…LFAL), 287–307 (ALLW…RSLI), 341–361 (LAIV…NYLV), 380–400 (IMLV…LPWL), 466–486 (LAIF…IAIP), 488–508 (GLFI…GRLL), 520–540 (SLLG…SLCV), and 541–561 (ILLE…VLLI). Positions 601–659 (DVVSGALISFSRVEKVGVIWQALKMTRHNGFPVIDEPPFTEASELCGIALRSHLLVLLQ) constitute a CBS 1 domain. The residue at position 672 (Ser-672) is a Phosphoserine. The CBS 2 domain occupies 713–777 (ITNTSPYTVL…VLGLYPHIDP (65 aa)). A helical membrane pass occupies residues 741–761 (HLCVVPKTPGRPPIVGILTRH).

Belongs to the chloride channel (TC 2.A.49) family. As to quaternary structure, homodimer. Interacts with PP2A5. In terms of tissue distribution, broadly expressed in the plant.

It localises to the membrane. Its function is as follows. Voltage-gated chloride channel. This is Chloride channel protein CLC-c (CLC-C) from Arabidopsis thaliana (Mouse-ear cress).